We begin with the raw amino-acid sequence, 493 residues long: Glycerol kinase (493 aa).

ADP is bound at residue Thr13. Residues Thr13, Thr14, and Ser15 each contribute to the ATP site. Thr13 lines the sn-glycerol 3-phosphate pocket. Arg17 serves as a coordination point for ADP. Arg83, Glu84, Tyr135, and Asp244 together coordinate sn-glycerol 3-phosphate. Glycerol is bound by residues Arg83, Glu84, Tyr135, Asp244, and Gln245. Positions 266 and 309 each coordinate ADP. Thr266, Gly309, Gln313, and Gly410 together coordinate ATP. ADP is bound by residues Gly410 and Asn414.

This sequence belongs to the FGGY kinase family.

The catalysed reaction is glycerol + ATP = sn-glycerol 3-phosphate + ADP + H(+). The protein operates within polyol metabolism; glycerol degradation via glycerol kinase pathway; sn-glycerol 3-phosphate from glycerol: step 1/1. Inhibited by fructose 1,6-bisphosphate (FBP). Key enzyme in the regulation of glycerol uptake and metabolism. Catalyzes the phosphorylation of glycerol to yield sn-glycerol 3-phosphate. This chain is Glycerol kinase, found in Shewanella halifaxensis (strain HAW-EB4).